A 342-amino-acid chain; its full sequence is Oxygen-dependent coproporphyrinogen-III oxidase (342 aa).

Ser98 provides a ligand contact to substrate. Positions 102 and 112 each coordinate a divalent metal cation. Residue His112 is the Proton donor of the active site. 114-116 (NYR) provides a ligand contact to substrate. A divalent metal cation contacts are provided by His146 and His176. The interval 266 to 301 (YVEFNLVWDRGTIFGLQTNGRTESILMSLPPLARWE) is important for dimerization.

This sequence belongs to the aerobic coproporphyrinogen-III oxidase family. Homodimer. A divalent metal cation is required as a cofactor.

Its subcellular location is the cytoplasm. It carries out the reaction coproporphyrinogen III + O2 + 2 H(+) = protoporphyrinogen IX + 2 CO2 + 2 H2O. Its pathway is porphyrin-containing compound metabolism; protoporphyrin-IX biosynthesis; protoporphyrinogen-IX from coproporphyrinogen-III (O2 route): step 1/1. Its function is as follows. Involved in the heme and chlorophyll biosynthesis. Catalyzes the aerobic oxidative decarboxylation of propionate groups of rings A and B of coproporphyrinogen-III to yield the vinyl groups in protoporphyrinogen-IX. The sequence is that of Oxygen-dependent coproporphyrinogen-III oxidase from Prochlorococcus marinus (strain MIT 9515).